The primary structure comprises 277 residues: Thymidylate synthase (277 aa).

A dUMP-binding site is contributed by Arg-21. His-51 is a (6R)-5,10-methylene-5,6,7,8-tetrahydrofolate binding site. 126–127 (RR) provides a ligand contact to dUMP. Cys-159 (nucleophile) is an active-site residue. Residues 179-182 (RSAD), Asn-190, and 220-222 (HLY) contribute to the dUMP site. Asp-182 is a (6R)-5,10-methylene-5,6,7,8-tetrahydrofolate binding site. Ser-276 contributes to the (6R)-5,10-methylene-5,6,7,8-tetrahydrofolate binding site.

Belongs to the thymidylate synthase family. Bacterial-type ThyA subfamily. Homodimer.

The protein resides in the cytoplasm. It catalyses the reaction dUMP + (6R)-5,10-methylene-5,6,7,8-tetrahydrofolate = 7,8-dihydrofolate + dTMP. Its pathway is pyrimidine metabolism; dTTP biosynthesis. Its function is as follows. Catalyzes the reductive methylation of 2'-deoxyuridine-5'-monophosphate (dUMP) to 2'-deoxythymidine-5'-monophosphate (dTMP) while utilizing 5,10-methylenetetrahydrofolate (mTHF) as the methyl donor and reductant in the reaction, yielding dihydrofolate (DHF) as a by-product. This enzymatic reaction provides an intracellular de novo source of dTMP, an essential precursor for DNA biosynthesis. The polypeptide is Thymidylate synthase (Hydrogenovibrio crunogenus (strain DSM 25203 / XCL-2) (Thiomicrospira crunogena)).